A 717-amino-acid polypeptide reads, in one-letter code: Putative amino acid transporter AAT1 (717 aa).

A compositionally biased stretch (basic and acidic residues) spans 1–10 (MREGAFDASR). The interval 1-88 (MREGAFDASR…DRAQTDSRQE (88 aa)) is disordered. Positions 16-25 (QRPSSLSTAQ) are enriched in polar residues. A compositionally biased stretch (low complexity) spans 26–53 (PPSDSRPPSSSSPPSSSSSSSSASSSSP). Basic and acidic residues predominate over residues 74-88 (SAEKMDRAQTDSRQE). Transmembrane regions (helical) follow at residues 124–143 (VLTLASSCLGAGVLATPYAM), 149–170 (LIGLSLLCMHTFVSFFTTYILM), 196–216 (AVDAIIVLNGLGVCLSFLVFL), 236–253 (HRAALLCASMVVIFPLSV), 265–283 (FFPVCALLFSLSCVVYRSL), 303–320 (FKSFNVFLFAFMQHINVC), 341–358 (AALLEYCLYTPIATLGYL), and 378–402 (LMHVCTLLLSFSMVLGVPLTLIPTV). The interval 462 to 602 (GDAEYGGAEA…REEREEREGQ (141 aa)) is disordered. Low complexity predominate over residues 463–477 (DAEYGGAEAGEATRG). Basic and acidic residues predominate over residues 497–519 (ARNRDRSRLHADSERSAGDREGS). The span at 547–558 (GSSSASSRSVDS) shows a compositional bias: low complexity. The segment covering 584-602 (SGDREAREEREEREEREGQ) has biased composition (basic and acidic residues). The next 3 membrane-spanning stretches (helical) occupy residues 622-638 (VCVAACLLPVLLLALVL), 644-669 (VVGLLGGFFSTLLMSALPSIIFYAGI), and 681-702 (LLMVFLLGVTCVGAFSSVIIIL).

The protein belongs to the amino acid/polyamine transporter 2 family.

It localises to the vacuole membrane. Its function is as follows. Putative amino acid transporter. Probably transports arginine. Involved in maintaining the osmotic homeostasis of the digestive vacuole. Required for extracellular parasite survival and bradyzoite differentiation. The polypeptide is Putative amino acid transporter AAT1 (Toxoplasma gondii (strain ATCC 50611 / Me49)).